The primary structure comprises 352 residues: UPF0324 membrane protein blr3189 (352 aa).

Helical transmembrane passes span 21 to 43 (IAAL…LLER), 53 to 71 (YVEA…RSFW), 88 to 110 (LLEV…ASGI), 114 to 136 (ASIA…LLGL), 143 to 165 (LIAC…IIGA), 175 to 197 (SFTA…LLQL), 204 to 226 (ILAG…AGLV), 236 to 253 (LMRV…SLVA), 265 to 284 (VGFF…LATL), 294 to 316 (VVGP…LGLG), and 329 to 351 (VTAA…VHWF).

The protein belongs to the UPF0324 family.

It localises to the cell membrane. This Bradyrhizobium diazoefficiens (strain JCM 10833 / BCRC 13528 / IAM 13628 / NBRC 14792 / USDA 110) protein is UPF0324 membrane protein blr3189.